Reading from the N-terminus, the 409-residue chain is Odorant receptor 35a (409 aa).

The Cytoplasmic portion of the chain corresponds to 1-35; it reads MVRYVPRFADGQKVKLAWPLAVFRLNHIFWPLDPS. The helical transmembrane segment at 36–56 threads the bilayer; the sequence is TGKWGRYLDKVLAVAMSLVFM. At 57-64 the chain is on the extracellular side; the sequence is QHNDAELR. A helical membrane pass occupies residues 65–85; it reads YLRFEASNRNLDAFLTGMPTY. The Cytoplasmic portion of the chain corresponds to 86 to 139; sequence LILVEAQFRSLHILLHFEKLQKFLEIFYANIYIDPRKEPEMFRKVDGKMIINRL. Residues 140–160 form a helical membrane-spanning segment; sequence VSAMYGAVISLYLIAPVFSII. The N-linked (GlcNAc...) asparagine glycan is linked to asparagine 161. The Extracellular portion of the chain corresponds to 161–177; it reads NQSKDFLYSMIFPFDSD. Residues 178-198 traverse the membrane as a helical segment; it reads PLYIFVPLLLTNVWVGIVIDT. Residues 199 to 273 are Cytoplasmic-facing; sequence MMFGETNLLC…QQLEAQYTVR (75 aa). The chain crosses the membrane as a helical span at residues 274-294; that stretch reads VFIMFAFAAGLLCALSFKAYT. The Extracellular portion of the chain corresponds to 295–302; that stretch reads NPMANYIY. Residues 303–323 traverse the membrane as a helical segment; that stretch reads AIWFGAKTVELLSLGQIGSDL. The Cytoplasmic segment spans residues 324–379; the sequence is AFTTDSLSTMYYLTHWEQILQYSTNPSENLRLLKLINLAIEMNSKPFYVTGLKYFR. A helical transmembrane segment spans residues 380-400; that stretch reads VSLQAGLKILQASFSYFTFLT. Residues 401–409 lie on the Extracellular side of the membrane; the sequence is SMQRRQMSN.

It belongs to the insect chemoreceptor superfamily. Heteromeric odorant receptor channel (TC 1.A.69) family. Or1a subfamily. In terms of assembly, interacts with Orco. Complexes exist early in the endomembrane system in olfactory sensory neurons (OSNs), coupling these complexes to the conserved ciliary trafficking pathway. Expressed in ac3B olfactory sensory neurons in the antenna.

Its subcellular location is the cell membrane. Its function is as follows. Odorant receptor which mediates acceptance or avoidance behavior, depending on its substrates. The odorant receptor repertoire encodes a large collection of odor stimuli that vary widely in identity, intensity, and duration. Forms a complex with Orco to form odorant-sensing units, providing sensitive and prolonged odorant signaling and calcium permeability. Involved in the behavioral responses to esters. Involved in the behavioral responses to butanol, pentanol, hexanol, octanol, propyl acetate, and butyl acetate. The sequence is that of Odorant receptor 35a (Or35a) from Drosophila melanogaster (Fruit fly).